Here is a 359-residue protein sequence, read N- to C-terminus: Probable L-ascorbate peroxidase 7, chloroplastic (359 aa).

Residues 1-71 (MAAQRLAALH…KAAGSGRSVM (71 aa)) constitute a chloroplast transit peptide. Residue histidine 118 is the Proton acceptor of the active site. Histidine 247 is a binding site for heme b. Threonine 248 lines the K(+) pocket. Residues 251–277 (RSRPERSGWGKPETKYTKNGPGAPGGQ) form a disordered region. Residues 252–266 (SRPERSGWGKPETKY) show a composition bias toward basic and acidic residues. Residues threonine 280 and aspartate 287 each contribute to the K(+) site.

This sequence belongs to the peroxidase family. Ascorbate peroxidase subfamily. Heme b serves as cofactor. In terms of tissue distribution, expressed in roots, leaves, stems and flowers.

Its subcellular location is the plastid. The protein localises to the chloroplast stroma. It carries out the reaction L-ascorbate + H2O2 = L-dehydroascorbate + 2 H2O. Its function is as follows. Plays a key role in hydrogen peroxide removal. The protein is Probable L-ascorbate peroxidase 7, chloroplastic of Oryza sativa subsp. japonica (Rice).